The chain runs to 610 residues: MSTQFDSAPFLKTVTNQPGVYRMYNAEAEVIYVGKAKDLKKRLTSYFRKNLDSEKTKALVSNIAKIDVTVTHTETEALILEHNYIKQYLPKYNVLLRDDKSYPYIFLSAHKHPRLSSHRGAKKRRGEYFGPYPDSGAVRETLHLIQKIFPVRQCEDTVYSNRTRPCLMYQIGRCAGPCVKGLISDQGYQEIVHYLRLFLQGKDNQVLSILVEKMEQASRELRFEDAAKARDQIQAIRRVQEQQFVSDDSLEDLDVLGFAQENGIACIHILMIRQGKVLGSRSHFPKIPSDTSQVEVFESFLSQYYLSHSEARSIPARIILNRGLTEETEALQIAISELAGRKVTFHVNPTGTRGRYLKLANTNALTAITTKMNHKMTISQRFKALQEELGMDAITRMECFDISHTMGESTMASCVVFNQEGPLKQEYRRYNITGITGGDDYAAMAQVLERRYSKQLDSSKIPDIIFIDGGKGQLNRAYEIISSCWQDWPKYPKIIGIAKGVTRKPGLETLITIDGDEFHLPSDAPALHLIQHIRDESHNHAIAGHRAQRGKTRRTSTLEGIEGVGPKRRQALLKYLGGMQELKRASVEEIAKVPGISHALAENIYQALKQ.

One can recognise a GIY-YIG domain in the interval 16–94 (NQPGVYRMYN…IKQYLPKYNV (79 aa)). Residues 204–239 (NQVLSILVEKMEQASRELRFEDAAKARDQIQAIRRV) form the UVR domain.

Belongs to the UvrC family. Interacts with UvrB in an incision complex.

The protein localises to the cytoplasm. The UvrABC repair system catalyzes the recognition and processing of DNA lesions. UvrC both incises the 5' and 3' sides of the lesion. The N-terminal half is responsible for the 3' incision and the C-terminal half is responsible for the 5' incision. The sequence is that of UvrABC system protein C from Vibrio cholerae serotype O1 (strain ATCC 39315 / El Tor Inaba N16961).